A 132-amino-acid chain; its full sequence is Small ribosomal subunit protein uS8 (132 aa).

The protein belongs to the universal ribosomal protein uS8 family. In terms of assembly, part of the 30S ribosomal subunit. Contacts proteins S5 and S12.

Functionally, one of the primary rRNA binding proteins, it binds directly to 16S rRNA central domain where it helps coordinate assembly of the platform of the 30S subunit. The polypeptide is Small ribosomal subunit protein uS8 (Bacillus anthracis (strain A0248)).